The primary structure comprises 817 residues: Putative ATP-dependent RNA helicase R350 (817 aa).

The interval 1-29 (MNRRNRSNDLNPEPSIENPNNQIAEEFPG) is disordered. The segment covering 17–29 (ENPNNQIAEEFPG) has biased composition (polar residues). The 179-residue stretch at 93 to 271 (LNPQGPYTSI…ALMFNLLRPG (179 aa)) folds into the Helicase ATP-binding domain. Residue 106–113 (HGLGSGKT) participates in ATP binding. The DEAH box motif lies at 206 to 209 (DEAH). Residues 495–661 (LAIAFMTYIS…STDEYVEDQA (167 aa)) form the Helicase C-terminal domain.

It belongs to the DEAD box helicase family. DEAH subfamily.

The protein localises to the virion. The enzyme catalyses ATP + H2O = ADP + phosphate + H(+). This chain is Putative ATP-dependent RNA helicase R350, found in Acanthamoeba polyphaga mimivirus (APMV).